Here is a 423-residue protein sequence, read N- to C-terminus: Gamma-glutamyl phosphate reductase (423 aa).

Low complexity predominate over residues 1–14 (MTLQAAPRSAAAQQ). Residues 1–25 (MTLQAAPRSAAAQQREPDLRQEVHD) form a disordered region. Basic and acidic residues predominate over residues 15–25 (REPDLRQEVHD).

The protein belongs to the gamma-glutamyl phosphate reductase family.

It localises to the cytoplasm. It carries out the reaction L-glutamate 5-semialdehyde + phosphate + NADP(+) = L-glutamyl 5-phosphate + NADPH + H(+). The protein operates within amino-acid biosynthesis; L-proline biosynthesis; L-glutamate 5-semialdehyde from L-glutamate: step 2/2. In terms of biological role, catalyzes the NADPH-dependent reduction of L-glutamate 5-phosphate into L-glutamate 5-semialdehyde and phosphate. The product spontaneously undergoes cyclization to form 1-pyrroline-5-carboxylate. The chain is Gamma-glutamyl phosphate reductase from Mycobacterium ulcerans (strain Agy99).